A 313-amino-acid chain; its full sequence is Sideroflexin-4 (313 aa).

2 helical membrane passes run 87-107 (AAFLPVTAPMVFLLMMPDTGI) and 141-161 (TLLGAGVSVSSTFIGLIPHLF). K173 bears the N6-acetyllysine mark. The next 3 membrane-spanning stretches (helical) occupy residues 175 to 191 (TLPIVFLAQVSGMNVFA), 230 to 247 (AVLFGTSALAPELFIHIF), and 269 to 289 (FFMMGLMVPVSFSMFPQIGQI).

Belongs to the sideroflexin family. As to expression, largely restricted to kidney, brain and heart.

The protein resides in the mitochondrion inner membrane. In terms of biological role, mitochondrial amino-acid transporter. Does not act as a serine transporter: not able to mediate transport of serine into mitochondria. This Mus musculus (Mouse) protein is Sideroflexin-4.